The sequence spans 571 residues: Protein tesmin/TSO1-like CXC 6 (571 aa).

Disordered stretches follow at residues 1-52 (MGEG…AAAS), 92-119 (IRHP…QKKK), 293-325 (NQGT…GGNA), 370-411 (LANQ…RSLS), and 507-571 (NGVS…KKDL). The segment covering 7–16 (GDKFPPKTDE) has biased composition (basic and acidic residues). Residues 117-241 (KKKQCNCKHS…KCLDCKNFEG (125 aa)) enclose the CRC domain. Polar residues-rich tracts occupy residues 293-319 (NQGT…QTGS), 373-388 (QKET…QGHV), and 508-539 (GVSQ…QTAK). Low complexity predominate over residues 540–557 (QPSQLTTTTTTPNTSSQT).

It belongs to the lin-54 family. In terms of tissue distribution, ubiquitous but expressed mostly in flowers.

The protein localises to the nucleus. Plays a role in development of both male and female reproductive tissues. The protein is Protein tesmin/TSO1-like CXC 6 (TCX6) of Arabidopsis thaliana (Mouse-ear cress).